The following is a 297-amino-acid chain: MKLKDFAFYAPCVWGTTYFVTTQFLPADKPLLAALIRALPAGIILILGKNLPPVGWLWRLFVLGALNIGVFFVMLFFAAYRLPGGVVALVGSLQPLIVILLSFLLLTQPVLKKQMVAAVAGGIGIVLLISLPKAPLNPAGLVASALATMSMASGLVLTKKWGRPAGMTMLTFTGWQLFCGGLVILPVQMLTEPLPDLVTLTNLAGYLYLAIPGSLLAYFMWFSGLEANSPVIMSLLGFLSPLVALLLGFLFLQQGLSGAQLVGVVFIFSALIIVQDISLFSRRKKVKPLEQSDCVIK.

A run of 10 helical transmembrane segments spans residues 6–26, 38–58, 60–80, 86–106, 116–136, 138–158, 167–187, 203–223, 231–251, and 261–281; these read FAFY…QFLP, ALPA…GWLW, LFVL…FAAY, VVAL…FLLL, VAAV…KAPL, PAGL…LVLT, MTML…ILPV, LAGY…MWFS, VIMS…GFLF, and LVGV…SLFS. 2 EamA domains span residues 12-130 and 149-276; these read CVWG…LLIS and MSMA…IVQD.

The protein belongs to the EamA transporter family.

Its subcellular location is the cell membrane. In terms of biological role, involved in pectinase, cellulase, and blue pigment regulation. This Dickeya dadantii (strain 3937) (Erwinia chrysanthemi (strain 3937)) protein is Protein PecM (pecM).